Here is a 354-residue protein sequence, read N- to C-terminus: Protein-arginine kinase (354 aa).

The Phosphagen kinase C-terminal domain maps to 24-254 (IVLSSRIRLA…QQIIQQEKMA (231 aa)). ATP contacts are provided by residues 27–31 (SSRIR), histidine 92, arginine 125, 176–180 (RASVM), and 207–212 (RGIYGE). The RDXXRA motif of the pArg binding pocket involved in allosteric regulation signature appears at 337–342 (RDYRRA).

Belongs to the ATP:guanido phosphotransferase family.

It carries out the reaction L-arginyl-[protein] + ATP = N(omega)-phospho-L-arginyl-[protein] + ADP + H(+). With respect to regulation, appears to be allosterically activated by the binding of pArg-containing polypeptides to the pArg-binding pocket localized in the C-terminal domain of McsB. In terms of biological role, catalyzes the specific phosphorylation of arginine residues in a large number of proteins. Is part of the bacterial stress response system. Protein arginine phosphorylation has a physiologically important role and is involved in the regulation of many critical cellular processes, such as protein homeostasis, motility, competence, and stringent and stress responses, by regulating gene expression and protein activity. The chain is Protein-arginine kinase from Bacillus anthracis (strain A0248).